The sequence spans 494 residues: UDP-N-acetylmuramoyl-L-alanyl-D-glutamate--L-lysine ligase (494 aa).

UDP-N-acetyl-alpha-D-muramoyl-L-alanyl-D-glutamate is bound at residue Ser-30. ATP is bound at residue 110–116; that stretch reads GTNGKTS. UDP-N-acetyl-alpha-D-muramoyl-L-alanyl-D-glutamate-binding positions include 152–153, Ser-179, and Arg-187; that span reads TT. Lys-219 carries the post-translational modification N6-carboxylysine. The short motif at 406–409 is the L-lysine recognition motif element; the sequence is DNPA.

The protein belongs to the MurCDEF family. MurE subfamily. Post-translationally, carboxylation is probably crucial for Mg(2+) binding and, consequently, for the gamma-phosphate positioning of ATP.

It is found in the cytoplasm. The catalysed reaction is UDP-N-acetyl-alpha-D-muramoyl-L-alanyl-D-glutamate + L-lysine + ATP = UDP-N-acetyl-alpha-D-muramoyl-L-alanyl-gamma-D-glutamyl-L-lysine + ADP + phosphate + H(+). Its pathway is cell wall biogenesis; peptidoglycan biosynthesis. Functionally, catalyzes the addition of L-lysine to the nucleotide precursor UDP-N-acetylmuramoyl-L-alanyl-D-glutamate (UMAG) in the biosynthesis of bacterial cell-wall peptidoglycan. The polypeptide is UDP-N-acetylmuramoyl-L-alanyl-D-glutamate--L-lysine ligase (Staphylococcus epidermidis (strain ATCC 35984 / DSM 28319 / BCRC 17069 / CCUG 31568 / BM 3577 / RP62A)).